The chain runs to 688 residues: Protein SDA1 homolog (688 aa).

Phosphoserine occurs at positions 232, 234, and 236. Residues 254 to 318 (KKSSKNKKKL…ERFEVKMMLM (65 aa)) are a coiled coil. Residues 484–498 (VENEEENAEGDEDGW) are compositionally biased toward acidic residues. Positions 484–524 (VENEEENAEGDEDGWESASLSDEADSDGEWVDVHHSSDEEQ) are disordered. Residues 514-524 (VDVHHSSDEEQ) are compositionally biased toward basic and acidic residues. Residues Ser586 and Ser596 each carry the phosphoserine modification. The tract at residues 605 to 688 (KKPKSDKETR…ALLKKRKRMK (84 aa)) is disordered. Positions 668 to 681 (SFREKQLALRDALL) are enriched in basic and acidic residues.

It belongs to the SDA1 family.

The protein resides in the nucleus. The protein localises to the nucleolus. Its function is as follows. Required for 60S pre-ribosomal subunits export to the cytoplasm. The sequence is that of Protein SDA1 homolog (SDAD1) from Bos taurus (Bovine).